The primary structure comprises 106 residues: Large ribosomal subunit protein P1A (106 aa).

Residues 74 to 106 (AGGGAAAEEAAEEEKEEEAKEESDDDMGFGLFD) are disordered. The span at 82-100 (EAAEEEKEEEAKEESDDDM) shows a compositional bias: acidic residues.

The protein belongs to the eukaryotic ribosomal protein P1/P2 family. In terms of assembly, component of the large ribosomal subunit (LSU). Mature ribosomes consist of a small (40S) and a large (60S) subunit. The 40S subunit contains about 32 different proteins and 1 molecule of RNA (18S). The 60S subunit contains 45 different proteins and 3 molecules of RNA (25S, 5.8S and 5S). The 5 acidic ribosomal P-proteins form the stalk structure of the 60S subunit. They are organized as a pentameric complex in which uL10/P0 interacts with 2 heterodimers, P1A-P2B and P1B-P2A. In terms of processing, phosphorylated.

The protein resides in the cytoplasm. In terms of biological role, component of the ribosome, a large ribonucleoprotein complex responsible for the synthesis of proteins in the cell. The small ribosomal subunit (SSU) binds messenger RNAs (mRNAs) and translates the encoded message by selecting cognate aminoacyl-transfer RNA (tRNA) molecules. The large subunit (LSU) contains the ribosomal catalytic site termed the peptidyl transferase center (PTC), which catalyzes the formation of peptide bonds, thereby polymerizing the amino acids delivered by tRNAs into a polypeptide chain. The nascent polypeptides leave the ribosome through a tunnel in the LSU and interact with protein factors that function in enzymatic processing, targeting, and the membrane insertion of nascent chains at the exit of the ribosomal tunnel. This Candida albicans (strain SC5314 / ATCC MYA-2876) (Yeast) protein is Large ribosomal subunit protein P1A (RPP1A).